A 101-amino-acid polypeptide reads, in one-letter code: MDGLVTQAKIQLRLFQLRMVQVQVLLLLLHCPKKELPKVSLLVSLALNEKNVMKYKCVFPSLNIIILMSDALMFFLRSSICKYRHTHIYIFMCIILANKHF.

Residues 58-80 (VFPSLNIIILMSDALMFFLRSSI) traverse the membrane as a helical segment.

The protein resides in the membrane. This is an uncharacterized protein from Saccharomyces cerevisiae (strain ATCC 204508 / S288c) (Baker's yeast).